The primary structure comprises 445 residues: 6-phosphogluconate dehydrogenase, decarboxylating (445 aa).

NADP(+) is bound by residues 1-4 (AVMG), 22-24 (NRS), 63-65 (VKA), and N91. Substrate contacts are provided by residues N91 and 117 to 119 (SGG). The active-site Proton acceptor is K172. A substrate-binding site is contributed by 175-176 (HN). E179 (proton donor) is an active-site residue. Substrate-binding residues include Y180, K249, R276, R434, and H440.

The protein belongs to the 6-phosphogluconate dehydrogenase family. In terms of assembly, homodimer.

The catalysed reaction is 6-phospho-D-gluconate + NADP(+) = D-ribulose 5-phosphate + CO2 + NADPH. Its pathway is carbohydrate degradation; pentose phosphate pathway; D-ribulose 5-phosphate from D-glucose 6-phosphate (oxidative stage): step 3/3. Catalyzes the oxidative decarboxylation of 6-phosphogluconate to ribulose 5-phosphate and CO(2), with concomitant reduction of NADP to NADPH. This is 6-phosphogluconate dehydrogenase, decarboxylating (gnd) from Citrobacter amalonaticus.